A 221-amino-acid polypeptide reads, in one-letter code: Vesicle-associated membrane protein 722 (221 aa).

The Cytoplasmic portion of the chain corresponds to 1 to 196; it reads MAQQSLIYSF…MWFQNMKIKL (196 aa). The 105-residue stretch at 10-114 folds into the Longin domain; it reads FVARGTVILV…SLNKEFGSKL (105 aa). A v-SNARE coiled-coil homology domain is found at 130-190; the sequence is KLAKVKAQVS…TQMRRKMWFQ (61 aa). Residues 197–217 form a helical; Anchor for type IV membrane protein membrane-spanning segment; the sequence is IVLAIIIALILIIILSICGGF. Residues 218–221 are Vesicular-facing; sequence NCGK.

It belongs to the synaptobrevin family. In terms of tissue distribution, highly expressed in stems and roots. Detected in flowers and leaves.

It is found in the cell membrane. The protein localises to the early endosome membrane. In terms of biological role, involved in the targeting and/or fusion of transport vesicles to their target membrane. In Arabidopsis thaliana (Mouse-ear cress), this protein is Vesicle-associated membrane protein 722.